Reading from the N-terminus, the 173-residue chain is Translocon-associated protein subunit delta (173 aa).

The N-terminal stretch at 1-23 (MAAMASFGALALLLLSGLSCCSA) is a signal peptide. Residues 24–144 (EACLEPQITP…SVDHRGTWNG (121 aa)) lie on the Lumenal side of the membrane. A disulfide bond links Cys26 and Cys57. Lys73 participates in a covalent cross-link: Glycyl lysine isopeptide (Lys-Gly) (interchain with G-Cter in ubiquitin). Residues 145 to 165 (PWVSTEVLAAAIGIVIYYLAF) traverse the membrane as a helical segment. Residues 166-173 (SAKSHIQA) are Cytoplasmic-facing.

Belongs to the TRAP-delta family. In terms of assembly, heterotetramer of TRAP-alpha, TRAP-beta, TRAP-delta and TRAP-gamma.

Its subcellular location is the endoplasmic reticulum membrane. Functionally, TRAP proteins are part of a complex whose function is to bind calcium to the ER membrane and thereby regulate the retention of ER resident proteins. The sequence is that of Translocon-associated protein subunit delta (Ssr4) from Rattus norvegicus (Rat).